The following is an 82-amino-acid chain: Host transcription reprogramming factor 10 (82 aa).

Positions 1 to 19 (MQIFNMVSLVALFALGATA) are cleaved as a signal peptide. The C2H2-type zinc finger occupies 57–81 (WVCHACNKQFTTPAALQKHKDTVVH).

Its subcellular location is the secreted. The protein resides in the host nucleus. In terms of biological role, probable secreted effector that translocates into the nuclei of host cells to reprogram the expression of targeted genes by binding on effector binding elements in rice. The sequence is that of Host transcription reprogramming factor 10 from Pyricularia oryzae (strain 70-15 / ATCC MYA-4617 / FGSC 8958) (Rice blast fungus).